The chain runs to 215 residues: Cytochrome c biogenesis ATP-binding export protein CcmA (215 aa).

The ABC transporter domain maps to 3 to 211 (LTAENLAARR…KMTGFAGVDR (209 aa)). Position 35-42 (35-42 (GRNGSGKS)) interacts with ATP.

It belongs to the ABC transporter superfamily. CcmA exporter (TC 3.A.1.107) family. The complex is composed of two ATP-binding proteins (CcmA) and two transmembrane proteins (CcmB).

Its subcellular location is the cell inner membrane. It catalyses the reaction heme b(in) + ATP + H2O = heme b(out) + ADP + phosphate + H(+). Part of the ABC transporter complex CcmAB involved in the biogenesis of c-type cytochromes; once thought to export heme, this seems not to be the case, but its exact role is uncertain. Responsible for energy coupling to the transport system. The protein is Cytochrome c biogenesis ATP-binding export protein CcmA of Rhizobium etli (strain ATCC 51251 / DSM 11541 / JCM 21823 / NBRC 15573 / CFN 42).